A 242-amino-acid chain; its full sequence is 1-(5-phosphoribosyl)-5-[(5-phosphoribosylamino)methylideneamino] imidazole-4-carboxamide isomerase (242 aa).

The active-site Proton acceptor is Asp-7. Asp-129 (proton donor) is an active-site residue.

It belongs to the HisA/HisF family.

The protein resides in the cytoplasm. It carries out the reaction 1-(5-phospho-beta-D-ribosyl)-5-[(5-phospho-beta-D-ribosylamino)methylideneamino]imidazole-4-carboxamide = 5-[(5-phospho-1-deoxy-D-ribulos-1-ylimino)methylamino]-1-(5-phospho-beta-D-ribosyl)imidazole-4-carboxamide. It functions in the pathway amino-acid biosynthesis; L-histidine biosynthesis; L-histidine from 5-phospho-alpha-D-ribose 1-diphosphate: step 4/9. The sequence is that of 1-(5-phosphoribosyl)-5-[(5-phosphoribosylamino)methylideneamino] imidazole-4-carboxamide isomerase from Pseudoalteromonas translucida (strain TAC 125).